Here is a 559-residue protein sequence, read N- to C-terminus: Sporulation protein kinase mde3 (559 aa).

The Protein kinase domain occupies 21–323; that stretch reads YLVKQKLGDG…TAKYCKEVFF (303 aa). ATP contacts are provided by residues 27 to 35 and Lys53; that span reads LGDGSFGTV. Asp150 functions as the Proton acceptor in the catalytic mechanism.

Belongs to the protein kinase superfamily. Ser/Thr protein kinase family.

It carries out the reaction L-seryl-[protein] + ATP = O-phospho-L-seryl-[protein] + ADP + H(+). The enzyme catalyses L-threonyl-[protein] + ATP = O-phospho-L-threonyl-[protein] + ADP + H(+). In terms of biological role, protein kinase which is essential for spore formation. In Schizosaccharomyces pombe (strain 972 / ATCC 24843) (Fission yeast), this protein is Sporulation protein kinase mde3 (mde3).